We begin with the raw amino-acid sequence, 97 residues long: MTSFPTTPPPAEELMATTILQATEALSPEAEASTALIAVVITVVFLTLLSVVILIFFYLYKNKGSYVTYEPADGEPGAVVLMENDSAKGREKEEYFI.

The Extracellular segment spans residues 1 to 36 (MTSFPTTPPPAEELMATTILQATEALSPEAEASTAL). The O-linked (GalNAc...) threonine glycan is linked to threonine 2. O-linked (GalNAc...) serine glycosylation occurs at serine 3. 5 O-linked (GalNAc...) threonine glycosylation sites follow: threonine 6, threonine 7, threonine 17, threonine 18, and threonine 23. Residues 37–57 (IAVVITVVFLTLLSVVILIFF) form a helical; Signal-anchor for type III membrane protein membrane-spanning segment. The Cytoplasmic portion of the chain corresponds to 58–97 (YLYKNKGSYVTYEPADGEPGAVVLMENDSAKGREKEEYFI).

Belongs to the SMAGP family. In terms of processing, O-glycosylated. The O-glycan is modified with sialic acid residues.

The protein localises to the cell membrane. Its subcellular location is the cytoplasmic vesicle membrane. Functionally, may play a role in epithelial cell-cell contacts. May play a role in tumor invasiveness and metastasis formation. This is Small cell adhesion glycoprotein (SMAGP) from Bos taurus (Bovine).